Consider the following 580-residue polypeptide: Frizzled-10-B (580 aa).

The N-terminal stretch at M1–G20 is a signal peptide. Over I21–K224 the chain is Extracellular. Positions S29 to A150 constitute an FZ domain. 5 cysteine pairs are disulfide-bonded: C34–C95, C42–C88, C79–C117, C106–C147, and C110–C134. The N-linked (GlcNAc...) asparagine glycan is linked to N48. N-linked (GlcNAc...) asparagine glycosylation is present at N153. The segment at R173 to S194 is disordered. Basic and acidic residues predominate over residues M180–S189. Residues F225–V245 traverse the membrane as a helical segment. The Cytoplasmic segment spans residues L246 to P261. A helical membrane pass occupies residues I262 to A282. Residues G283 to T309 lie on the Extracellular side of the membrane. The helical transmembrane segment at I310 to T330 threads the bilayer. The Cytoplasmic segment spans residues L331 to S350. The helical transmembrane segment at S351–M371 threads the bilayer. Residues R372–A392 lie on the Extracellular side of the membrane. Residues L393–L413 form a helical membrane-spanning segment. The Cytoplasmic portion of the chain corresponds to S414–R442. A helical membrane pass occupies residues I443 to Y463. Residues E464–E501 are Extracellular-facing. The chain crosses the membrane as a helical span at residues I502 to W522. The Cytoplasmic segment spans residues T523 to V580. The Lys-Thr-X-X-X-Trp motif, mediates interaction with the PDZ domain of Dvl family members motif lies at K525–W530. Residues K558–V580 form a disordered region. Positions T578–V580 match the PDZ-binding motif.

Belongs to the G-protein coupled receptor Fz/Smo family. Expressed in liver, lung, brain, testis, heart and ovary.

Its subcellular location is the cell membrane. Receptor for Wnt proteins. Most of frizzled receptors are coupled to the beta-catenin canonical signaling pathway, which leads to the activation of disheveled proteins, inhibition of GSK-3 kinase, nuclear accumulation of beta-catenin and activation of Wnt target genes. A second signaling pathway involving PKC and calcium fluxes has been seen for some family members, but it is not yet clear if it represents a distinct pathway or if it can be integrated in the canonical pathway, as PKC seems to be required for Wnt-mediated inactivation of GSK-3 kinase. Both pathways seem to involve interactions with G-proteins. May be involved in transduction and intercellular transmission of polarity information during tissue morphogenesis and/or in differentiated tissues. Activated by Wnt8. Could have an antagonizing activity in the morphogenesis during development. This is Frizzled-10-B (fzd10-b) from Xenopus laevis (African clawed frog).